The chain runs to 384 residues: Oxoeicosanoid receptor 1 (384 aa).

Residues 1–21 (MELHNLSSPSPSLSSSVLPPS) are disordered. Topologically, residues 1-58 (MELHNLSSPSPSLSSSVLPPSFSPSPSSAPSAFTTVGGSSGGPCHPTSSSLVSAFLAP) are extracellular. Asparagine 5 carries N-linked (GlcNAc...) asparagine glycosylation. Residues 7–21 (SSPSPSLSSSVLPPS) are compositionally biased toward low complexity. The chain crosses the membrane as a helical span at residues 59-79 (ILALEFVLGLVGNSLALFIFC). The Cytoplasmic portion of the chain corresponds to 80–87 (IHTRPWTS). A helical transmembrane segment spans residues 88–108 (NTVFLVSLVAADFLLISNLPL). At 109 to 129 (RVDYYLLHETWRFGAAACKVN) the chain is on the extracellular side. Residues cysteine 126 and cysteine 198 are joined by a disulfide bond. Residues 130–152 (LFMLSTNRTASVVFLTAIALNRY) form a helical membrane-spanning segment. At 153-172 (LKVVQPHHVLSRASVGAAAR) the chain is on the cytoplasmic side. The helical transmembrane segment at 173 to 193 (VAGGLWVGILLLNGHLLLSTF) threads the bilayer. Residues 194 to 215 (SGPSCLSYRVGTKPSASLRWHQ) lie on the Extracellular side of the membrane. The helical transmembrane segment at 216 to 236 (ALYLLEFFLPLALILFAIVSI) threads the bilayer. At 237-256 (GLTIRNRGLGGQAGPQRAMR) the chain is on the cytoplasmic side. The helical transmembrane segment at 257–277 (VLAMVVAVYTICFLPSIIFGM) threads the bilayer. Residues 278–297 (ASMVAFWLSACRSLDLCTQL) are Extracellular-facing. Residues 298–318 (FHGSLAFTYLNSVLDPVLYCF) traverse the membrane as a helical segment. The Cytoplasmic segment spans residues 319–384 (SSPNFLHQSR…SLEKEGSSQG (66 aa)).

This sequence belongs to the G-protein coupled receptor 1 family. In terms of tissue distribution, expressed in various tissues except brain. Expression is more intense in liver, kidney, peripheral leukocyte, lung, and spleen than in other tissues. Highly expressed in eosinophils, neutrophils, and lung macrophages.

The protein resides in the membrane. Functionally, receptor for eicosanoids and polyunsaturated fatty acids such as 5-oxo-6E,8Z,11Z,14Z-eicosatetraenoic acid (5-OXO-ETE), 5(S)-hydroperoxy-6E,8Z,11Z,14Z-eicosatetraenoic acid (5(S)-HPETE) and arachidonic acid. Seems to be coupled to the G(i)/G(o), families of heteromeric G proteins. The protein is Oxoeicosanoid receptor 1 (OXER1) of Homo sapiens (Human).